A 347-amino-acid chain; its full sequence is Protein-arginine kinase (347 aa).

The 226-residue stretch at 22 to 247 (LVVSTRIRLA…EQVIQAERHA (226 aa)) folds into the Phosphagen kinase C-terminal domain. ATP-binding positions include 25 to 29 (STRIR), histidine 85, arginine 118, 169 to 173 (RASVM), and 200 to 205 (RGRYGE). The short motif at 330 to 335 (RDRERA) is the RDXXRA motif of the pArg binding pocket involved in allosteric regulation element.

It belongs to the ATP:guanido phosphotransferase family.

The catalysed reaction is L-arginyl-[protein] + ATP = N(omega)-phospho-L-arginyl-[protein] + ADP + H(+). Appears to be allosterically activated by the binding of pArg-containing polypeptides to the pArg-binding pocket localized in the C-terminal domain of McsB. In terms of biological role, catalyzes the specific phosphorylation of arginine residues in proteins. The protein is Protein-arginine kinase of Exiguobacterium sp. (strain ATCC BAA-1283 / AT1b).